A 302-amino-acid polypeptide reads, in one-letter code: Glycine N-acyltransferase-like protein 1 (302 aa).

This sequence belongs to the glycine N-acyltransferase family. In terms of tissue distribution, expressed in liver and kidney and, at lower levels, in pancreas, testis, ovary and stomach.

It carries out the reaction an acyl-CoA + L-glutamine = an N(2)-acyl-L-glutamine + CoA + H(+). In terms of biological role, acyltransferase which transfers an acyl group to the N-terminus of glutamine. Can use phenylacetyl-CoA as an acyl donor. This Homo sapiens (Human) protein is Glycine N-acyltransferase-like protein 1.